The primary structure comprises 465 residues: UPF0324 membrane protein CC_0425 (465 aa).

The tract at residues 97 to 132 (HRQPDRAPPARASEQPLRQGRRALRRRPDQRRHRPR) is disordered. Positions 115 to 132 (QGRRALRRRPDQRRHRPR) are enriched in basic residues. Transmembrane regions (helical) follow at residues 135–157 (AAAL…LMAV), 172–194 (LLAV…GAGL), 219–241 (AALG…GIGA), 251–273 (LAEA…LAAS), 286–308 (TALV…PPIA), 318–340 (AGVF…ASVS), 352–374 (LSRI…RTAQ), 378–400 (ISGL…ARGL), 405–427 (PALV…GAIS), and 442–464 (LAIL…TRIF).

It belongs to the UPF0324 family.

It is found in the cell membrane. The sequence is that of UPF0324 membrane protein CC_0425 from Caulobacter vibrioides (strain ATCC 19089 / CIP 103742 / CB 15) (Caulobacter crescentus).